The sequence spans 188 residues: Large ribosomal subunit protein uL5 (188 aa).

This sequence belongs to the universal ribosomal protein uL5 family. Part of the 50S ribosomal subunit; part of the 5S rRNA/L5/L18/L25 subcomplex. Contacts the 5S rRNA and the P site tRNA. Forms a bridge to the 30S subunit in the 70S ribosome.

In terms of biological role, this is one of the proteins that bind and probably mediate the attachment of the 5S RNA into the large ribosomal subunit, where it forms part of the central protuberance. In the 70S ribosome it contacts protein S13 of the 30S subunit (bridge B1b), connecting the 2 subunits; this bridge is implicated in subunit movement. Contacts the P site tRNA; the 5S rRNA and some of its associated proteins might help stabilize positioning of ribosome-bound tRNAs. The chain is Large ribosomal subunit protein uL5 from Aquifex aeolicus (strain VF5).